The sequence spans 197 residues: Zinc finger protein 581 (197 aa).

Residues 1-10 show a composition bias toward pro residues; it reads MLVLPSPCPQ. The interval 1–52 is disordered; the sequence is MLVLPSPCPQPLAFSSVETMEGPPRRTCRSPEPGPSSSIGSPQASSPPRPNH. Residues 35-44 show a composition bias toward low complexity; the sequence is PSSSIGSPQA. C2H2-type zinc fingers lie at residues 87–109, 115–137, 145–167, and 173–196; these read YSCP…SITH, FECD…HSIH, HGCP…SRVH, and FQCP…RWKH.

It is found in the nucleus. Functionally, may be involved in transcriptional regulation. This chain is Zinc finger protein 581 (ZNF581), found in Homo sapiens (Human).